Reading from the N-terminus, the 526-residue chain is Cytochrome P450 monooxygenase 253 (526 aa).

Helical transmembrane passes span 13–33 (IASS…LLLI), 115–135 (FIMA…GYGK), and 306–326 (IGAG…AMTL). Cys451 contributes to the heme binding site.

Belongs to the cytochrome P450 family. Requires heme as cofactor.

The protein localises to the membrane. The protein operates within secondary metabolite biosynthesis. Cytochrome P450 monooxygenase that is able to use delta(6)-protoilludene as a substrate to produce delta(6)-protoilludene-8-ol. This Postia placenta (strain ATCC 44394 / Madison 698-R) (Brown rot fungus) protein is Cytochrome P450 monooxygenase 253.